Here is a 173-residue protein sequence, read N- to C-terminus: MALRVVRSVRALLCTLRAVPSPAAPCPPRPWQLGVGAVRTLRTGPALLSVRKFTEKHEWVTTENGIGTVGISNFAQEALGDVVYCSLPEVGTKLNKQDEFGALESVKAASELYSPLSGEVTEINEALAENPGLVNKSCYEDGWLIKMTLSNPSELDELMSEEAYEKYIKSIEE.

Residues 1 to 48 constitute a mitochondrion transit peptide; it reads MALRVVRSVRALLCTLRAVPSPAAPCPPRPWQLGVGAVRTLRTGPALL. One can recognise a Lipoyl-binding domain in the interval 66–148; sequence IGTVGISNFA…YEDGWLIKMT (83 aa). An N6-lipoyllysine modification is found at K107.

The protein belongs to the GcvH family. Interacts with GLDC. The glycine cleavage system is composed of four proteins: P (GLDC), T (GCST), L (DLD) and H (GCSH). (R)-lipoate is required as a cofactor.

The protein localises to the mitochondrion. Its function is as follows. The glycine cleavage system catalyzes the degradation of glycine. The H protein (GCSH) shuttles the methylamine group of glycine from the P protein (GLDC) to the T protein (GCST). Has a pivotal role in the lipoylation of enzymes involved in cellular energetics such as the mitochondrial dihydrolipoyllysine-residue acetyltransferase component of pyruvate dehydrogenase complex (DLAT), and the mitochondrial dihydrolipoyllysine-residue succinyltransferase component of 2-oxoglutarate dehydrogenase complex (DLST). This chain is Glycine cleavage system H protein, mitochondrial, found in Homo sapiens (Human).